The primary structure comprises 243 residues: Ubiquinone/menaquinone biosynthesis C-methyltransferase UbiE (243 aa).

S-adenosyl-L-methionine-binding positions include Thr-69, Asp-90, and 116–117 (DA).

The protein belongs to the class I-like SAM-binding methyltransferase superfamily. MenG/UbiE family.

The catalysed reaction is a 2-demethylmenaquinol + S-adenosyl-L-methionine = a menaquinol + S-adenosyl-L-homocysteine + H(+). It carries out the reaction a 2-methoxy-6-(all-trans-polyprenyl)benzene-1,4-diol + S-adenosyl-L-methionine = a 5-methoxy-2-methyl-3-(all-trans-polyprenyl)benzene-1,4-diol + S-adenosyl-L-homocysteine + H(+). The protein operates within quinol/quinone metabolism; menaquinone biosynthesis; menaquinol from 1,4-dihydroxy-2-naphthoate: step 2/2. Its pathway is cofactor biosynthesis; ubiquinone biosynthesis. Its function is as follows. Methyltransferase required for the conversion of demethylmenaquinol (DMKH2) to menaquinol (MKH2) and the conversion of 2-polyprenyl-6-methoxy-1,4-benzoquinol (DDMQH2) to 2-polyprenyl-3-methyl-6-methoxy-1,4-benzoquinol (DMQH2). This Paraburkholderia phymatum (strain DSM 17167 / CIP 108236 / LMG 21445 / STM815) (Burkholderia phymatum) protein is Ubiquinone/menaquinone biosynthesis C-methyltransferase UbiE.